We begin with the raw amino-acid sequence, 399 residues long: Dihydrolipoyllysine-residue succinyltransferase component of 2-oxoglutarate dehydrogenase complex (399 aa).

Positions 2 to 77 (AIDIKAPTFP…LSGELLGKLT (76 aa)) constitute a Lipoyl-binding domain. Lys43 carries the post-translational modification N6-lipoyllysine. Positions 104–141 (ILSPAARKIAEENAIAADSITGTGKGGRVTKEDAVAAA) constitute a Peripheral subunit-binding (PSBD) domain. Residues His370 and Asp374 contribute to the active site.

The protein belongs to the 2-oxoacid dehydrogenase family. In terms of assembly, forms a 24-polypeptide structural core with octahedral symmetry. Part of the 2-oxoglutarate dehydrogenase (OGDH) complex composed of E1 (2-oxoglutarate dehydrogenase), E2 (dihydrolipoamide succinyltransferase) and E3 (dihydrolipoamide dehydrogenase); the complex contains multiple copies of the three enzymatic components (E1, E2 and E3). (R)-lipoate serves as cofactor.

It carries out the reaction N(6)-[(R)-dihydrolipoyl]-L-lysyl-[protein] + succinyl-CoA = N(6)-[(R)-S(8)-succinyldihydrolipoyl]-L-lysyl-[protein] + CoA. The protein operates within amino-acid degradation; L-lysine degradation via saccharopine pathway; glutaryl-CoA from L-lysine: step 6/6. Its function is as follows. E2 component of the 2-oxoglutarate dehydrogenase (OGDH) complex which catalyzes the second step in the conversion of 2-oxoglutarate to succinyl-CoA and CO(2). The protein is Dihydrolipoyllysine-residue succinyltransferase component of 2-oxoglutarate dehydrogenase complex (sucB) of Azotobacter vinelandii.